We begin with the raw amino-acid sequence, 418 residues long: Sialidase-3 (418 aa).

Positions 24-27 (YRIP) match the FRIP motif motif. The substrate site is built by arginine 25 and arginine 45. Aspartate 50 acts as the Proton acceptor in catalysis. The BNR 1 repeat unit spans residues 129 to 140 (LYSEDSGCSWGE). Substrate contacts are provided by tyrosine 179 and tyrosine 181. The stretch at 201–212 (FYSDDLGVTWHC) is one BNR 2 repeat. Residues glutamate 223 and arginine 243 each coordinate substrate. The stretch at 252-263 (AFSTDSGDCFQK) is one BNR 3 repeat. A substrate-binding site is contributed by arginine 339. Residue tyrosine 369 is the Nucleophile of the active site. Residue glutamate 386 is part of the active site.

This sequence belongs to the glycosyl hydrolase 33 family. In terms of assembly, interacts with CAV1; this interaction enhances NEU3 sialidase activity within caveola. Interacts with EGFR; this interaction mediates desialylation of EGFR enhancing downstream signaling. Post-translationally, palmitoylated; may regulate intracellular trafficking and anchorage to plasma membrane and endomembranes. In terms of tissue distribution, expressed in brain, cardiac muscle and weakly in liver.

The protein resides in the cell membrane. Its subcellular location is the membrane. The protein localises to the caveola. It is found in the early endosome membrane. It localises to the recycling endosome membrane. The protein resides in the lysosome membrane. The catalysed reaction is Hydrolysis of alpha-(2-&gt;3)-, alpha-(2-&gt;6)-, alpha-(2-&gt;8)- glycosidic linkages of terminal sialic acid residues in oligosaccharides, glycoproteins, glycolipids, colominic acid and synthetic substrates.. It carries out the reaction a ganglioside GD1a + H2O = a ganglioside GM1 + N-acetylneuraminate. The enzyme catalyses a ganglioside GD1a (d18:1(4E)) + H2O = a ganglioside GM1 (d18:1(4E)) + N-acetylneuraminate. It catalyses the reaction a ganglioside GD1b + H2O = a ganglioside GM1 + N-acetylneuraminate. The catalysed reaction is a ganglioside GD1b (d18:1(4E)) + H2O = a ganglioside GM1 (d18:1(4E)) + N-acetylneuraminate. It carries out the reaction a ganglioside GD3 + H2O = a ganglioside GM3 + N-acetylneuraminate. The enzyme catalyses a ganglioside GD3 (d18:1(4E)) + H2O = a ganglioside GM3 (d18:1(4E)) + N-acetylneuraminate. It catalyses the reaction a ganglioside GM3 + H2O = a beta-D-galactosyl-(1-&gt;4)-beta-D-glucosyl-(1&lt;-&gt;1)-ceramide + N-acetylneuraminate. The catalysed reaction is a ganglioside GM1 + H2O = a ganglioside GA1 + N-acetylneuraminate. It carries out the reaction a ganglioside GM1 (d18:1(4E)) + H2O = a ganglioside GA1 (d18:1(4E)) + N-acetylneuraminate. The enzyme catalyses a ganglioside GM2 (d18:1(4E)) + H2O = a ganglioside GA2 (d18:1(4E)) + N-acetylneuraminate. It catalyses the reaction a ganglioside GM3 (d18:1(4E)) + H2O = a beta-D-Gal-(1-&gt;4)-beta-D-Glc-(1&lt;-&gt;1)-Cer(d18:1(4E)) + N-acetylneuraminate. The catalysed reaction is a ganglioside GT1b + H2O = a ganglioside GD1b + N-acetylneuraminate. Functionally, exo-alpha-sialidase that catalyzes the hydrolytic cleavage of the terminal sialic acid (N-acetylneuraminic acid, Neu5Ac) of a glycan moiety in the catabolism of glycolipids, glycoproteins and oligosacharides. Displays high catalytic efficiency for gangliosides including alpha-(2-&gt;3)-sialylated GD1a and GM3 and alpha-(2-&gt;8)-sialylated GD3. Plays a role in the regulation of transmembrane signaling through the modulation of ganglioside content of the lipid bilayer and by direct interaction with signaling receptors, such as EGFR. Desialylates EGFR and activates downstream signaling in proliferating cells. Contributes to clathrin-mediated endocytosis by regulating sorting of endocytosed receptors to early and recycling endosomes. The protein is Sialidase-3 (Neu3) of Rattus norvegicus (Rat).